The sequence spans 178 residues: N-alpha-acetyltransferase 20 (178 aa).

The 156-residue stretch at 2-157 (TTLRAFTCDD…DAYDMRKALS (156 aa)) folds into the N-acetyltransferase domain.

This sequence belongs to the acetyltransferase family. ARD1 subfamily. As to quaternary structure, component of the N-terminal acetyltransferase B (NatB) complex which is composed of naa20 and naa25.

Its subcellular location is the cytoplasm. It localises to the nucleus. The enzyme catalyses N-terminal L-methionyl-L-asparaginyl-[protein] + acetyl-CoA = N-terminal N(alpha)-acetyl-L-methionyl-L-asparaginyl-[protein] + CoA + H(+). It carries out the reaction N-terminal L-methionyl-L-glutaminyl-[protein] + acetyl-CoA = N-terminal N(alpha)-acetyl-L-methionyl-L-glutaminyl-[protein] + CoA + H(+). The catalysed reaction is N-terminal L-methionyl-L-aspartyl-[protein] + acetyl-CoA = N-terminal N(alpha)-acetyl-L-methionyl-L-aspartyl-[protein] + CoA + H(+). It catalyses the reaction N-terminal L-methionyl-L-glutamyl-[protein] + acetyl-CoA = N-terminal N(alpha)-acetyl-L-methionyl-L-glutamyl-[protein] + CoA + H(+). Its function is as follows. Catalytic subunit of the NatB complex which catalyzes acetylation of the N-terminal methionine residues of peptides beginning with Met-Asp, Met-Glu, Met-Asn and Met-Gln. Proteins with cell cycle functions are overrepresented in the pool of NatB substrates. Required for maintaining the structure and function of actomyosin fibers and for proper cellular migration. The sequence is that of N-alpha-acetyltransferase 20 (naa20) from Danio rerio (Zebrafish).